Reading from the N-terminus, the 277-residue chain is Tryptophan synthase alpha chain (277 aa).

Active-site proton acceptor residues include Glu-50 and Asp-61.

The protein belongs to the TrpA family. As to quaternary structure, tetramer of two alpha and two beta chains.

It carries out the reaction (1S,2R)-1-C-(indol-3-yl)glycerol 3-phosphate + L-serine = D-glyceraldehyde 3-phosphate + L-tryptophan + H2O. It participates in amino-acid biosynthesis; L-tryptophan biosynthesis; L-tryptophan from chorismate: step 5/5. The alpha subunit is responsible for the aldol cleavage of indoleglycerol phosphate to indole and glyceraldehyde 3-phosphate. This chain is Tryptophan synthase alpha chain, found in Beijerinckia indica subsp. indica (strain ATCC 9039 / DSM 1715 / NCIMB 8712).